The following is a 321-amino-acid chain: Lipoyl synthase (321 aa).

Positions 68, 73, 79, 94, 98, 101, and 308 each coordinate [4Fe-4S] cluster. In terms of domain architecture, Radical SAM core spans 80 to 297 (FNHGTATFMI…KALADELGFT (218 aa)).

Belongs to the radical SAM superfamily. Lipoyl synthase family. Requires [4Fe-4S] cluster as cofactor.

Its subcellular location is the cytoplasm. It catalyses the reaction [[Fe-S] cluster scaffold protein carrying a second [4Fe-4S](2+) cluster] + N(6)-octanoyl-L-lysyl-[protein] + 2 oxidized [2Fe-2S]-[ferredoxin] + 2 S-adenosyl-L-methionine + 4 H(+) = [[Fe-S] cluster scaffold protein] + N(6)-[(R)-dihydrolipoyl]-L-lysyl-[protein] + 4 Fe(3+) + 2 hydrogen sulfide + 2 5'-deoxyadenosine + 2 L-methionine + 2 reduced [2Fe-2S]-[ferredoxin]. The protein operates within protein modification; protein lipoylation via endogenous pathway; protein N(6)-(lipoyl)lysine from octanoyl-[acyl-carrier-protein]: step 2/2. Its function is as follows. Catalyzes the radical-mediated insertion of two sulfur atoms into the C-6 and C-8 positions of the octanoyl moiety bound to the lipoyl domains of lipoate-dependent enzymes, thereby converting the octanoylated domains into lipoylated derivatives. This Shewanella putrefaciens (strain CN-32 / ATCC BAA-453) protein is Lipoyl synthase.